Consider the following 82-residue polypeptide: Defensin-like protein 7 (82 aa).

The first 29 residues, 1-29 (MKSSTTSMQLIPTLFFLTILLASPEMVEG), serve as a signal peptide directing secretion. Glutamine 30 is subject to Pyrrolidone carboxylic acid. 4 cysteine pairs are disulfide-bonded: cysteine 33–cysteine 77, cysteine 44–cysteine 64, cysteine 50–cysteine 71, and cysteine 54–cysteine 73.

The protein belongs to the DEFL family. Expressed in stems, roots, rosette leaves and flower buds.

The protein localises to the secreted. The protein is Defensin-like protein 7 (LCR75) of Arabidopsis thaliana (Mouse-ear cress).